Reading from the N-terminus, the 243-residue chain is Glutathione S-transferase U14 (243 aa).

The 83-residue stretch at 5 to 87 (DTVKLIGCSD…YLDEAWPSDP (83 aa)) folds into the GST N-terminal domain. Glutathione contacts are provided by residues 15-16 (DP), 44-45 (EK), 58-59 (KT), and 71-72 (ES). Positions 93 to 220 (NAYDRASARF…MPTVEEVTEL (128 aa)) constitute a GST C-terminal domain. Thr159 carries the phosphothreonine modification.

Belongs to the GST superfamily. Tau family.

It is found in the cytoplasm. It localises to the cytosol. The enzyme catalyses RX + glutathione = an S-substituted glutathione + a halide anion + H(+). Its function is as follows. May be involved in the conjugation of reduced glutathione to a wide number of exogenous and endogenous hydrophobic electrophiles and have a detoxification role against certain herbicides. The chain is Glutathione S-transferase U14 (GSTU14) from Arabidopsis thaliana (Mouse-ear cress).